A 196-amino-acid polypeptide reads, in one-letter code: Cupin-domain-containing oxidoreductase srdB (196 aa).

The 65-residue stretch at 92 to 156 (DFAPGCKSNM…TSDEKPARML (65 aa)) folds into the Cupin type-2 domain.

The protein belongs to the virC family.

Functionally, cupin-domain-containing oxidoreductase; part of the gene cluster that mediates the biosynthesis of sordarial, a salicylic aldehyde structurally related to the phytotoxin pyriculol. The most interesting aspect of this pathway is formation of an aromatic product from the highly reducing polyketide synthase srdA. SrdA synthesizes a reduced polyketide chain from one molecule of acetyl-CoA and five molecules of malonyl-CoA. The polyketide chain is then reductively released as an aldehyde. The oxidoreductases srdC, srdD and srdE then oxidize one of the hydroxy groups to facilitate the intramolecular aldol condensation, followed by dehydration to yield a salicylic aldehyde. This aldehyde can undergo facile reduction by endogenous reductases to yield the alcohol 1-hydroxy-2-hydroxymethyl-3-pent-1,3-dienylbenzene. The flavin-dependent srdI counteract against the propensity of the aldehydes to be reduced under physiological conditions and is responsible for reoxidizing 1-hydroxy-2-hydroxymethyl-3-pent-1,3-dienylbenzene back to the salicylic aldehyde. This salicylic aldehyde is then selectively epoxidized by the cupin-domain-containing oxidoreductase srdB to yield the epoxide, which can be hydrolyzed stereoselectively by the hydrolase srdG to give the final product sordarial. The chain is Cupin-domain-containing oxidoreductase srdB from Neurospora crassa (strain ATCC 24698 / 74-OR23-1A / CBS 708.71 / DSM 1257 / FGSC 987).